Consider the following 347-residue polypeptide: NADH-ubiquinone oxidoreductase chain 2 (347 aa).

11 helical membrane passes run P3–S23, H25–M45, S67–M87, M96–P116, I122–L142, I145–G165, I178–P198, M200–M220, A237–L257, D274–M294, and L325–I345.

This sequence belongs to the complex I subunit 2 family. Core subunit of respiratory chain NADH dehydrogenase (Complex I) which is composed of 45 different subunits. Interacts with TMEM242.

It localises to the mitochondrion inner membrane. The catalysed reaction is a ubiquinone + NADH + 5 H(+)(in) = a ubiquinol + NAD(+) + 4 H(+)(out). Core subunit of the mitochondrial membrane respiratory chain NADH dehydrogenase (Complex I) which catalyzes electron transfer from NADH through the respiratory chain, using ubiquinone as an electron acceptor. Essential for the catalytic activity and assembly of complex I. This chain is NADH-ubiquinone oxidoreductase chain 2, found in Ovis aries (Sheep).